A 530-amino-acid polypeptide reads, in one-letter code: MPGKWISALLLLQISCCFQSGNCGKVLVWPMEFSHWMNIKTILDELVQRGHEVTVLKPSAYYVLDPKKSPDLKFETFPTSVSKDELENYFIKLVDVWTYELQRDTCLSYSPLLQNMIDGFSDYYLSLCKDTVSNKQLMAKLQESKFDVLLSDPVAACGELIAEVLHIPFLYSLRFSPGYKIEKSSGRFILPPSYVPVILSGMGGPMTFIDRVKNMICTLYFDFWFHMFNAKKWDPFYSEILGRPTTLAETMGKAEMWLIRSYWDLEFPHPTLPNVDYIGGLQCRPPKPLPKDMEDFVQSSGEHGVVVFSLGSMVSSMTEEKANAIAWALAQIPQKVLWKFDGKTPATLGPNTRVYKWLPQNDLLGHPKTKAFVTHSGANGVYEAIYHGIPMVGIPMFGEQHDNIAHMVAKGAAVTLNIRTMSKSDLFNALKEIINNPFYKKNAVWLSTIHHDQPMKPLDKAVFWIEFVMRHKGAKHLRPLGHDLPWYQYHSLDVIGFLLTCSAVIAVLTVKCFLFIYRLFVKKEKKMKNE.

The signal sequence occupies residues 1–23 (MPGKWISALLLLQISCCFQSGNC). The chain crosses the membrane as a helical span at residues 494-510 (VIGFLLTCSAVIAVLTV).

Belongs to the UDP-glycosyltransferase family.

Its subcellular location is the endoplasmic reticulum membrane. It carries out the reaction glucuronate acceptor + UDP-alpha-D-glucuronate = acceptor beta-D-glucuronoside + UDP + H(+). The catalysed reaction is 17alpha-estradiol + UDP-alpha-D-glucuronate = 17alpha-estradiol 3-O-(beta-D-glucuronate) + UDP + H(+). The enzyme catalyses 17alpha-estradiol + UDP-alpha-D-glucuronate = 17alpha-estradiol 17-O-(beta-D-glucuronate) + UDP + H(+). It catalyses the reaction 17beta-estradiol + UDP-alpha-D-glucuronate = 17beta-estradiol 17-O-(beta-D-glucuronate) + UDP + H(+). It carries out the reaction 17beta-hydroxy-5alpha-androstan-3-one + UDP-alpha-D-glucuronate = 5alpha-dihydrotestosterone 17-O-(beta-D-glucuronate) + UDP + H(+). The catalysed reaction is testosterone + UDP-alpha-D-glucuronate = testosterone 17-O-(beta-D-glucuronate) + UDP + H(+). Its function is as follows. UDP-glucuronosyltransferase (UGT) that catalyzes phase II biotransformation reactions in which lipophilic substrates are conjugated with glucuronic acid to increase the metabolite's water solubility, thereby facilitating excretion into either the urine or bile. Catalyzes the glucuronidation of endogenous steroid hormones such as androgens (epitestosterone, androsterone) and estrogens (estradiol, epiestradiol). The protein is UDP-glucuronosyltransferase 2B17 of Rattus norvegicus (Rat).